We begin with the raw amino-acid sequence, 368 residues long: Probable dual-specificity RNA methyltransferase RlmN (368 aa).

Residue Glu100 is the Proton acceptor of the active site. Residues 106–344 (QYYGLSVCVT…CVVRQEHGTD (239 aa)) form the Radical SAM core domain. Cys113 and Cys349 form a disulfide bridge. [4Fe-4S] cluster contacts are provided by Cys120, Cys124, and Cys127. S-adenosyl-L-methionine-binding positions include 172-173 (GE), Ser204, 227-229 (SLH), and Asn305. Catalysis depends on Cys349, which acts as the S-methylcysteine intermediate.

This sequence belongs to the radical SAM superfamily. RlmN family. [4Fe-4S] cluster is required as a cofactor.

Its subcellular location is the cytoplasm. It carries out the reaction adenosine(2503) in 23S rRNA + 2 reduced [2Fe-2S]-[ferredoxin] + 2 S-adenosyl-L-methionine = 2-methyladenosine(2503) in 23S rRNA + 5'-deoxyadenosine + L-methionine + 2 oxidized [2Fe-2S]-[ferredoxin] + S-adenosyl-L-homocysteine. The catalysed reaction is adenosine(37) in tRNA + 2 reduced [2Fe-2S]-[ferredoxin] + 2 S-adenosyl-L-methionine = 2-methyladenosine(37) in tRNA + 5'-deoxyadenosine + L-methionine + 2 oxidized [2Fe-2S]-[ferredoxin] + S-adenosyl-L-homocysteine. Functionally, specifically methylates position 2 of adenine 2503 in 23S rRNA and position 2 of adenine 37 in tRNAs. The protein is Probable dual-specificity RNA methyltransferase RlmN of Streptococcus agalactiae serotype III (strain NEM316).